The primary structure comprises 611 residues: UvrABC system protein C (611 aa).

One can recognise a GIY-YIG domain in the interval 12-96; sequence DQPGIYQYFD…IKQLKPKYNI (85 aa). The 36-residue stretch at 202 to 237 folds into the UVR domain; that stretch reads EKILEILNQKMQKYAENLQFEEAAEIRDRIKSIESA.

This sequence belongs to the UvrC family. In terms of assembly, interacts with UvrB in an incision complex.

It localises to the cytoplasm. The UvrABC repair system catalyzes the recognition and processing of DNA lesions. UvrC both incises the 5' and 3' sides of the lesion. The N-terminal half is responsible for the 3' incision and the C-terminal half is responsible for the 5' incision. The chain is UvrABC system protein C from Nautilia profundicola (strain ATCC BAA-1463 / DSM 18972 / AmH).